A 349-amino-acid chain; its full sequence is Isopentenyl-diphosphate delta-isomerase (349 aa).

Residue 6–7 coordinates substrate; it reads RK. FMN-binding positions include 62 to 64, Ser-93, and Asn-122; that span reads AMT. Residue Gln-152 coordinates substrate. Position 153 (Glu-153) interacts with Mg(2+). FMN contacts are provided by residues Lys-184, Thr-214, 258–259, and 280–281; these read GG and AG.

It belongs to the IPP isomerase type 2 family. Homooctamer. Dimer of tetramers. It depends on FMN as a cofactor. NADPH is required as a cofactor. Requires Mg(2+) as cofactor.

It localises to the cytoplasm. It catalyses the reaction isopentenyl diphosphate = dimethylallyl diphosphate. Its function is as follows. Involved in the biosynthesis of isoprenoids. Catalyzes the 1,3-allylic rearrangement of the homoallylic substrate isopentenyl (IPP) to its allylic isomer, dimethylallyl diphosphate (DMAPP). This is Isopentenyl-diphosphate delta-isomerase from Bacillus cereus (strain ATCC 10987 / NRS 248).